Reading from the N-terminus, the 489-residue chain is Adenosylhomocysteinase (489 aa).

Positions 68, 151, and 213 each coordinate substrate. An NAD(+)-binding site is contributed by 214–216 (TTT). Lysine 243 and aspartate 247 together coordinate substrate. NAD(+)-binding positions include asparagine 248, 277 to 282 (GYGDVG), glutamate 300, asparagine 335, 356 to 358 (IGH), and asparagine 403.

The protein belongs to the adenosylhomocysteinase family. It depends on NAD(+) as a cofactor.

It localises to the cytoplasm. The enzyme catalyses S-adenosyl-L-homocysteine + H2O = L-homocysteine + adenosine. The protein operates within amino-acid biosynthesis; L-homocysteine biosynthesis; L-homocysteine from S-adenosyl-L-homocysteine: step 1/1. In terms of biological role, may play a key role in the regulation of the intracellular concentration of adenosylhomocysteine. In Mycobacterium sp. (strain JLS), this protein is Adenosylhomocysteinase.